The chain runs to 224 residues: Orotate phosphoribosyltransferase (224 aa).

5-phospho-alpha-D-ribose 1-diphosphate is bound by residues Lys-26, 73 to 74, Arg-100, Lys-101, Lys-104, His-106, and 127 to 135; these read YK and EDVTTSGKS. Thr-131 and Arg-160 together coordinate orotate.

Belongs to the purine/pyrimidine phosphoribosyltransferase family. PyrE subfamily. In terms of assembly, homodimer. Mg(2+) is required as a cofactor.

It catalyses the reaction orotidine 5'-phosphate + diphosphate = orotate + 5-phospho-alpha-D-ribose 1-diphosphate. Its pathway is pyrimidine metabolism; UMP biosynthesis via de novo pathway; UMP from orotate: step 1/2. Its function is as follows. Catalyzes the transfer of a ribosyl phosphate group from 5-phosphoribose 1-diphosphate to orotate, leading to the formation of orotidine monophosphate (OMP). This Clostridium botulinum (strain Eklund 17B / Type B) protein is Orotate phosphoribosyltransferase.